Reading from the N-terminus, the 2559-residue chain is Nonribosomal peptide synthetase asqK (2559 aa).

Positions 90–474 (YRPSHTAIHA…SRKDSQVKIR (385 aa)) are adenylation 1. The region spanning 593–669 (TNIEQLVHEL…SLVHYPAGLE (77 aa)) is the Carrier 1 domain. Position 627 is an O-(pantetheine 4'-phosphoryl)serine (serine 627). Positions 695 to 989 (TVEQSFSQAR…GNVQCIRTKV (295 aa)) are condensation 1. Residues 1155 to 1562 (FDEQVRAQTD…GRMDQQVKVR (408 aa)) form an adenylation 2 region. The interval 1681–1776 (LEIGTGSGMI…NTIKDLVRQG (96 aa)) is methyltransferase. The region spanning 2090 to 2164 (AFTSEIERAV…GLAQHLQGLG (75 aa)) is the Carrier 2 domain. Position 2124 is an O-(pantetheine 4'-phosphoryl)serine (serine 2124). Residues 2261 to 2409 (FDGVSLSAIL…VNRCLLRVKV (149 aa)) form a condensation 2 region.

This sequence belongs to the NRP synthetase family.

The catalysed reaction is O-methyl-L-tyrosine + anthranilate + S-adenosyl-L-methionine + 2 ATP = (-)-4'-methoxycyclopeptine + 2 AMP + S-adenosyl-L-homocysteine + 2 diphosphate + 2 H(+). It carries out the reaction anthranilate + L-phenylalanine + S-adenosyl-L-methionine + 2 ATP = cyclopeptine + 2 AMP + S-adenosyl-L-homocysteine + 2 diphosphate + 2 H(+). The protein operates within secondary metabolite biosynthesis. It functions in the pathway alkaloid biosynthesis. It participates in mycotoxin biosynthesis. Its function is as follows. Nonribosomal peptide synthetase; part of the gene cluster that mediates the biosynthesis of the aspoquinolone mycotoxins. The first stage is catalyzed by the nonribosomal peptide synthetase asqK that condenses anthranilic acid and O-methyl-L-tyrosine to produce 4'-methoxycyclopeptin. AsqK is also able to use anthranilic acid and L-phenylalanine as substrates to produce cyclopeptin, but at a tenfold lower rate. Within the pathway, 4'-methoxycyclopeptin is then converted to 4'-methoxydehydrocyclopeptin by the ketoglutarate-dependent dioxygenase asqJ. AsqJ also converts its first product 4'-methoxydehydrocyclopeptin to 4'-methoxycyclopenin. The following conversion of 4'-methoxycyclopenin into 4'-methoxyviridicatin is catalyzed by the cyclopenase asqI. 4'-methoxyviridicatin is the precursor of quinolone natural products, and is further converted to quinolinone B. The prenyltransferase asqH1 then catalyzes the canonical Friedel-Crafts alkylation of quinolinone B with dimethylallyl cation to yield dimethylallyl quinolone, which is subjected to FAD-dependent dehydrogenation by the FAD-linked oxidoreductase asqF to yield conjugated aryl diene. The delta(3') double bond then serves as the site of the second alkylation with DMAPP catalyzed by the prenyltransferase asqH2 to yield a carbenium ion intermediate, which can be attacked by H(2)O to yield a styrenyl quinolone containing a C3'-hydroxyprenyl chain. The FAD-dependent monooxygenase asqG performs epoxidation of the terminal C7'-C8' olefin. Finally, after dehydratation of the epoxide at C3 by asqC, the quinolone epoxide rearrangement protein asqO catalyzes an enzymatic 3-exo-tet cyclization to yield the cyclopropyl-THF ring system in aspoquinolone. This chain is Nonribosomal peptide synthetase asqK, found in Emericella nidulans (strain FGSC A4 / ATCC 38163 / CBS 112.46 / NRRL 194 / M139) (Aspergillus nidulans).